The following is a 197-amino-acid chain: Phospholipid hydroperoxide glutathione peroxidase (197 aa).

The residue at position 40 (serine 40) is a Phosphoserine. The active site involves selenocysteine 73. Selenocysteine 73 is a non-standard amino acid (selenocysteine). Valine 78 carries the post-translational modification Phosphoserine.

This sequence belongs to the glutathione peroxidase family. Monomer. Has a tendency to form higher mass oligomers. Interacts with FUNDC1; this interaction promotes GPX4 recruitment into mitochondria through TOM/TIM complex where it is degraded by mitophagy. As to expression, present primarily in testis. Expressed in flagella of epididymal sperm. Isoform Cytoplasmic: Highly expressed in testis. Present in spermatogonia, spermatocyte and spermatid (at protein level).

It localises to the nucleus. It is found in the nucleolus. The protein resides in the mitochondrion. Its subcellular location is the cytoplasm. The catalysed reaction is a hydroperoxy polyunsaturated fatty acid + 2 glutathione = a hydroxy polyunsaturated fatty acid + glutathione disulfide + H2O. It catalyses the reaction 2 glutathione + H2O2 = glutathione disulfide + 2 H2O. The enzyme catalyses tert-butyl hydroperoxide + 2 glutathione = tert-butanol + glutathione disulfide + H2O. It carries out the reaction cumene hydroperoxide + 2 glutathione = 2-phenylpropan-2-ol + glutathione disulfide + H2O. The catalysed reaction is (9S)-hydroperoxy-(10E,12Z)-octadecadienoate + 2 glutathione = (9S)-hydroxy-(10E,12Z)-octadecadienoate + glutathione disulfide + H2O. It catalyses the reaction (13S)-hydroperoxy-(9Z,11E)-octadecadienoate + 2 glutathione = (13S)-hydroxy-(9Z,11E)-octadecadienoate + glutathione disulfide + H2O. The enzyme catalyses (5S)-hydroperoxy-(6E,8Z,11Z,14Z)-eicosatetraenoate + 2 glutathione = (5S)-hydroxy-(6E,8Z,11Z,14Z)-eicosatetraenoate + glutathione disulfide + H2O. It carries out the reaction (12R)-hydroperoxy-(5Z,8Z,10E,14Z)-eicosatetraenoate + 2 glutathione = (12R)-hydroxy-(5Z,8Z,10E,14Z)-eicosatetraenoate + glutathione disulfide + H2O. The catalysed reaction is (12S)-hydroperoxy-(5Z,8Z,10E,14Z)-eicosatetraenoate + 2 glutathione = (12S)-hydroxy-(5Z,8Z,10E,14Z)-eicosatetraenoate + glutathione disulfide + H2O. It catalyses the reaction (15S)-hydroperoxy-(5Z,8Z,11Z,13E)-eicosatetraenoate + 2 glutathione = (15S)-hydroxy-(5Z,8Z,11Z,13E)-eicosatetraenoate + glutathione disulfide + H2O. The enzyme catalyses (5S)-hydroperoxy-(6E,8Z,11Z,14Z,17Z)-eicosapentaenoate + 2 glutathione = (5S)-hydroxy-(6E,8Z,11Z,14Z,17Z)-eicosapentaenoate + glutathione disulfide + H2O. It carries out the reaction (12S)-hydroperoxy-(5Z,8Z,10E,14Z,17Z)-eicosapentaenoate + 2 glutathione = (12S)-hydroxy-(5Z,8Z,10E,14Z,17Z)-eicosapentaenoate + glutathione disulfide + H2O. The catalysed reaction is (15S)-hydroperoxy-(5Z,8Z,11Z,13E,17Z)-eicosapentaenoate + 2 glutathione = (15S)-hydroxy-(5Z,8Z,11Z,13E,17Z)-eicosapentaenoate + glutathione disulfide + H2O. It catalyses the reaction (15S)-hydroperoxy-(11Z,13E)-eicosadienoate + 2 glutathione = (15S)-hydroxy-(11Z,13E)-eicosadienoate + glutathione disulfide + H2O. The enzyme catalyses (17S)-hydroperoxy-(4Z,7Z,10Z,13Z,15E,19Z)-docosahexaenoate + 2 glutathione = (17S)-hydroxy-(4Z,7Z,10Z,13Z,15E,19Z)-docosahexaenoate + glutathione disulfide + H2O. It carries out the reaction a hydroperoxy-1,2-diacyl-glycero-3-phosphocholine + 2 glutathione = a hydroxy-1,2-diacyl-glycero-3-phosphocholine + glutathione disulfide + H2O. Its function is as follows. Essential antioxidant peroxidase that directly reduces phospholipid hydroperoxide even if they are incorporated in membranes and lipoproteins. Can also reduce fatty acid hydroperoxide, cholesterol hydroperoxide and thymine hydroperoxide. Plays a key role in protecting cells from oxidative damage by preventing membrane lipid peroxidation. Required to prevent cells from ferroptosis, a non-apoptotic cell death resulting from an iron-dependent accumulation of lipid reactive oxygen species. The presence of selenocysteine (Sec) versus Cys at the active site is essential for life: it provides resistance to overoxidation and prevents cells against ferroptosis. The presence of Sec at the active site is also essential for the survival of a specific type of parvalbumin-positive interneurons, thereby preventing against fatal epileptic seizures. May be required to protect cells from the toxicity of ingested lipid hydroperoxides. Required for normal sperm development and male fertility. Essential for maturation and survival of photoreceptor cells. Plays a role in a primary T-cell response to viral and parasitic infection by protecting T-cells from ferroptosis and by supporting T-cell expansion. Plays a role of glutathione peroxidase in platelets in the arachidonic acid metabolism. Reduces hydroperoxy ester lipids formed by a 15-lipoxygenase that may play a role as down-regulator of the cellular 15-lipoxygenase pathway. Can also reduce small soluble hydroperoxides such as H2O2, cumene hydroperoxide and tert-butyl hydroperoxide. Specifically able to suppress the production of leukotriene and prostaglandin in response to several stimuli by reducing fatty acid hydroperoxide. In terms of biological role, specifically required to prevent mitochondrial cell death by mediating reduction of cardiolipin hydroperoxide. Also required for normal sperm development and male fertility. Functionally, required for male fertility by stabilizing the condensed chromatin in sperm nuclei. This is Phospholipid hydroperoxide glutathione peroxidase from Rattus norvegicus (Rat).